The following is a 258-amino-acid chain: NAD kinase (258 aa).

The Proton acceptor role is filled by aspartate 51. Residues 51-52, lysine 56, 119-120, lysine 130, aspartate 149, 160-165, and alanine 184 contribute to the NAD(+) site; these read DG, ND, and TAYSLS.

The protein belongs to the NAD kinase family. It depends on a divalent metal cation as a cofactor.

The protein resides in the cytoplasm. It catalyses the reaction NAD(+) + ATP = ADP + NADP(+) + H(+). Its function is as follows. Involved in the regulation of the intracellular balance of NAD and NADP, and is a key enzyme in the biosynthesis of NADP. Catalyzes specifically the phosphorylation on 2'-hydroxyl of the adenosine moiety of NAD to yield NADP. The protein is NAD kinase of Thermotoga sp. (strain RQ2).